The following is a 561-amino-acid chain: 2-methylisocitrate lyase, mitochondrial (561 aa).

The disordered stretch occupies residues 154-177; that stretch reads KAQSMHDRKQWDTRRKMSPDERSK. Basic and acidic residues predominate over residues 157-177; that stretch reads SMHDRKQWDTRRKMSPDERSK. The active site involves Cys-228.

Belongs to the isocitrate lyase/PEP mutase superfamily. Isocitrate lyase family. Requires Mg(2+) as cofactor.

The protein localises to the mitochondrion matrix. It carries out the reaction (2S,3R)-3-hydroxybutane-1,2,3-tricarboxylate = pyruvate + succinate. It functions in the pathway organic acid metabolism; propanoate degradation. In terms of biological role, component of the methylcitrate cycle that catalyzes the formation of pyruvate and succinate from 2-methylisocitrate during the metabolism of endogenous propionyl-CoA. Plays an important role for growth and development, but also in antagonism, root colonization and induction of defense responses in plants. This chain is 2-methylisocitrate lyase, mitochondrial, found in Hypocrea atroviridis (strain ATCC 20476 / IMI 206040) (Trichoderma atroviride).